The primary structure comprises 345 residues: Glycerol-3-phosphate dehydrogenase [NAD(P)+] (345 aa).

Positions 11, 12, 32, 33, and 106 each coordinate NADPH. Sn-glycerol 3-phosphate-binding residues include Lys106, Gly137, and Ser139. Ala141 contributes to the NADPH binding site. Positions 192, 245, 255, 256, and 257 each coordinate sn-glycerol 3-phosphate. Catalysis depends on Lys192, which acts as the Proton acceptor. An NADPH-binding site is contributed by Arg256. The NADPH site is built by Val280 and Glu282.

The protein belongs to the NAD-dependent glycerol-3-phosphate dehydrogenase family.

It is found in the cytoplasm. It catalyses the reaction sn-glycerol 3-phosphate + NAD(+) = dihydroxyacetone phosphate + NADH + H(+). It carries out the reaction sn-glycerol 3-phosphate + NADP(+) = dihydroxyacetone phosphate + NADPH + H(+). The protein operates within membrane lipid metabolism; glycerophospholipid metabolism. Its activity is regulated as follows. Does not seem to be inhibited by sn-glycerol 3-phosphate, in contrast to the E.coli homolog enzyme which is very sensitive to allosteric inhibition by G3P. Functionally, catalyzes the reduction of the glycolytic intermediate dihydroxyacetone phosphate (DHAP) to sn-glycerol 3-phosphate (G3P), the key precursor for phospholipid synthesis. This is Glycerol-3-phosphate dehydrogenase [NAD(P)+] from Bacillus subtilis (strain 168).